We begin with the raw amino-acid sequence, 224 residues long: Octanoyl-[acyl-carrier-protein]:protein N-octanoyltransferase LIPT2, mitochondrial (224 aa).

Residues 37 to 217 (SNIPNTLLLC…AFTEQFNCTL (181 aa)) form the BPL/LPL catalytic domain. Residues 81–88 (RGGLITFH), 147–149 (AIG), and 160–162 (GLA) each bind substrate. C178 (acyl-thioester intermediate) is an active-site residue.

Belongs to the LipB family.

It localises to the mitochondrion. The enzyme catalyses octanoyl-[ACP] + L-lysyl-[protein] = N(6)-octanoyl-L-lysyl-[protein] + holo-[ACP] + H(+). The protein operates within protein modification; protein lipoylation via endogenous pathway; protein N(6)-(lipoyl)lysine from octanoyl-[acyl-carrier-protein]: step 1/2. Functionally, catalyzes the transfer of endogenously produced octanoic acid from octanoyl-acyl-carrier-protein (octanoyl-ACP) onto the lipoyl domains of lipoate-dependent enzymes such as the protein H of the glycine cleavage system (GCSH). Lipoyl-ACP can also act as a substrate although octanoyl-ACP is likely to be the physiological substrate. The sequence is that of Octanoyl-[acyl-carrier-protein]:protein N-octanoyltransferase LIPT2, mitochondrial (lipt2) from Danio rerio (Zebrafish).